Reading from the N-terminus, the 240-residue chain is Ribonuclease HII (240 aa).

One can recognise an RNase H type-2 domain in the interval 27-226 (GPVAGVDEAG…GETRSLRLED (200 aa)). A divalent metal cation is bound by residues Asp33, Glu34, and Asp127.

Belongs to the RNase HII family. Mn(2+) is required as a cofactor. Mg(2+) serves as cofactor.

The protein localises to the cytoplasm. It carries out the reaction Endonucleolytic cleavage to 5'-phosphomonoester.. Endonuclease that specifically degrades the RNA of RNA-DNA hybrids. The chain is Ribonuclease HII from Parafrankia sp. (strain EAN1pec).